A 134-amino-acid chain; its full sequence is Small ribosomal subunit protein uS11 (134 aa).

The segment at 115-134 (VTPIPTDSTRRKGGRRGRRL) is disordered. A compositionally biased stretch (basic residues) spans 125-134 (RKGGRRGRRL).

The protein belongs to the universal ribosomal protein uS11 family.

In Syntrichia ruralis (Great hairy screw-moss), this protein is Small ribosomal subunit protein uS11 (RPS14).